Here is a 346-residue protein sequence, read N- to C-terminus: Biotin synthase (346 aa).

A Radical SAM core domain is found at 38-256 (QQVQVSTLLS…IAVARIMMPT (219 aa)). Residues cysteine 53, cysteine 57, and cysteine 60 each contribute to the [4Fe-4S] cluster site. Residues cysteine 97, cysteine 128, cysteine 188, and arginine 260 each contribute to the [2Fe-2S] cluster site.

This sequence belongs to the radical SAM superfamily. Biotin synthase family. As to quaternary structure, homodimer. [4Fe-4S] cluster is required as a cofactor. Requires [2Fe-2S] cluster as cofactor.

The enzyme catalyses (4R,5S)-dethiobiotin + (sulfur carrier)-SH + 2 reduced [2Fe-2S]-[ferredoxin] + 2 S-adenosyl-L-methionine = (sulfur carrier)-H + biotin + 2 5'-deoxyadenosine + 2 L-methionine + 2 oxidized [2Fe-2S]-[ferredoxin]. The protein operates within cofactor biosynthesis; biotin biosynthesis; biotin from 7,8-diaminononanoate: step 2/2. In terms of biological role, catalyzes the conversion of dethiobiotin (DTB) to biotin by the insertion of a sulfur atom into dethiobiotin via a radical-based mechanism. The polypeptide is Biotin synthase (Salmonella gallinarum (strain 287/91 / NCTC 13346)).